We begin with the raw amino-acid sequence, 348 residues long: tRNA N6-adenosine threonylcarbamoyltransferase (348 aa).

Positions 116 and 120 each coordinate Fe cation. Residues 138 to 142 (IISGG), aspartate 171, glycine 184, and asparagine 282 contribute to the substrate site. Residue aspartate 310 coordinates Fe cation.

Belongs to the KAE1 / TsaD family. Fe(2+) serves as cofactor.

It is found in the cytoplasm. The catalysed reaction is L-threonylcarbamoyladenylate + adenosine(37) in tRNA = N(6)-L-threonylcarbamoyladenosine(37) in tRNA + AMP + H(+). Functionally, required for the formation of a threonylcarbamoyl group on adenosine at position 37 (t(6)A37) in tRNAs that read codons beginning with adenine. Is involved in the transfer of the threonylcarbamoyl moiety of threonylcarbamoyl-AMP (TC-AMP) to the N6 group of A37, together with TsaE and TsaB. TsaD likely plays a direct catalytic role in this reaction. This chain is tRNA N6-adenosine threonylcarbamoyltransferase, found in Ehrlichia ruminantium (strain Welgevonden).